Here is a 379-residue protein sequence, read N- to C-terminus: Cytochrome b (379 aa).

8 consecutive transmembrane segments (helical) span residues 33–53, 77–98, 113–133, 178–198, 226–246, 288–308, 320–340, and 347–367; these read FGSLLGLCLLIQILTGLFLAM, WLIRYMHANGASMFFICLFLHV, WNIGVILLFAVMATAFMGYVL, FFAFHFILPFIVAALVMVHLL, IKDVLGVLLLLLLFMMLVLFS, LGGVLALVFSILILMLFPILH, LSQCLFWILVADLFTLTWIGG, and FITIGQVASILYFTIILLALP. Heme b contacts are provided by H83 and H97. Heme b contacts are provided by H182 and H196.

This sequence belongs to the cytochrome b family. The cytochrome bc1 complex contains 11 subunits: 3 respiratory subunits (MT-CYB, CYC1 and UQCRFS1), 2 core proteins (UQCRC1 and UQCRC2) and 6 low-molecular weight proteins (UQCRH/QCR6, UQCRB/QCR7, UQCRQ/QCR8, UQCR10/QCR9, UQCR11/QCR10 and a cleavage product of UQCRFS1). This cytochrome bc1 complex then forms a dimer. Requires heme b as cofactor.

The protein resides in the mitochondrion inner membrane. Component of the ubiquinol-cytochrome c reductase complex (complex III or cytochrome b-c1 complex) that is part of the mitochondrial respiratory chain. The b-c1 complex mediates electron transfer from ubiquinol to cytochrome c. Contributes to the generation of a proton gradient across the mitochondrial membrane that is then used for ATP synthesis. The polypeptide is Cytochrome b (MT-CYB) (Sciurus niger (Eastern fox squirrel)).